The sequence spans 320 residues: HPr kinase/phosphorylase (320 aa).

Catalysis depends on residues His141 and Lys162. Residue 156–163 (GHSGLGKS) participates in ATP binding. Mg(2+) is bound at residue Ser163. Asp180 (proton acceptor; for phosphorylation activity. Proton donor; for dephosphorylation activity) is an active-site residue. Residues 204 to 213 (LEVRGLGILN) are important for the catalytic mechanism of both phosphorylation and dephosphorylation. Glu205 provides a ligand contact to Mg(2+). Residue Arg248 is part of the active site. Residues 269 to 274 (PVAVGR) are important for the catalytic mechanism of dephosphorylation.

It belongs to the HPrK/P family. In terms of assembly, homohexamer. Requires Mg(2+) as cofactor.

It catalyses the reaction [HPr protein]-L-serine + ATP = [HPr protein]-O-phospho-L-serine + ADP + H(+). The enzyme catalyses [HPr protein]-O-phospho-L-serine + phosphate + H(+) = [HPr protein]-L-serine + diphosphate. Catalyzes the ATP- as well as the pyrophosphate-dependent phosphorylation of a specific serine residue in HPr, a phosphocarrier protein of the phosphoenolpyruvate-dependent sugar phosphotransferase system (PTS). HprK/P also catalyzes the pyrophosphate-producing, inorganic phosphate-dependent dephosphorylation (phosphorolysis) of seryl-phosphorylated HPr (P-Ser-HPr). This is HPr kinase/phosphorylase from Neisseria gonorrhoeae (strain ATCC 700825 / FA 1090).